We begin with the raw amino-acid sequence, 263 residues long: Thiazole synthase (263 aa).

Residue Lys-102 is the Schiff-base intermediate with DXP of the active site. Residues Gly-164, 190–191, and 212–213 each bind 1-deoxy-D-xylulose 5-phosphate; these read AG and NT.

It belongs to the ThiG family. In terms of assembly, homotetramer. Forms heterodimers with either ThiH or ThiS.

It localises to the cytoplasm. The catalysed reaction is [ThiS sulfur-carrier protein]-C-terminal-Gly-aminoethanethioate + 2-iminoacetate + 1-deoxy-D-xylulose 5-phosphate = [ThiS sulfur-carrier protein]-C-terminal Gly-Gly + 2-[(2R,5Z)-2-carboxy-4-methylthiazol-5(2H)-ylidene]ethyl phosphate + 2 H2O + H(+). The protein operates within cofactor biosynthesis; thiamine diphosphate biosynthesis. Functionally, catalyzes the rearrangement of 1-deoxy-D-xylulose 5-phosphate (DXP) to produce the thiazole phosphate moiety of thiamine. Sulfur is provided by the thiocarboxylate moiety of the carrier protein ThiS. In vitro, sulfur can be provided by H(2)S. This Helicobacter hepaticus (strain ATCC 51449 / 3B1) protein is Thiazole synthase.